Here is a 99-residue protein sequence, read N- to C-terminus: High mobility group protein I (99 aa).

The tract at residues 1 to 99 (MSDSPVKKGR…ADTEEVNSSD (99 aa)) is disordered. Serine 4 bears the Phosphoserine; by CDC2 and MAPK mark. Positions 7-19 (KKGRGRPAKAKPE) form a DNA-binding region, a.T hook 1. A compositionally biased stretch (basic and acidic residues) spans 16 to 46 (AKPEETASPKAAKKEEKKVEEVPKKIEESTK). Serine 23 carries the phosphoserine; by MAPK modification. Positions 54–66 (KKGRGRPSKGDKA) form a DNA-binding region, a.T hook 2. At serine 73 the chain carries Phosphoserine; by PKC. The a.T hook 3 DNA-binding region spans 74–86 (GKGRGRPAKNAKK). The span at 90–99 (ADTEEVNSSD) shows a compositional bias: acidic residues.

Belongs to the HMGA family. Phosphorylated in a cell-cycle dependent manner; substantially reduced in cells that have finished proliferating and are differentiated. Phosphorylation at Ser-4 and Ser-23 results in a 10-fold weakening of DNA-binding activity and altered the mode of protein-DNA interaction.

The protein resides in the nucleus. It is found in the nucleolus. It localises to the chromosome. In terms of biological role, binds preferentially to the minor groove of A+T rich regions in double-stranded DNA via the second and third DBA-binding domains. It is suggested that these proteins could function in nucleosome phasing and in the 3'-end processing of mRNA transcripts. They are also involved in the transcription regulation of genes containing, or in close proximity to A+T-rich regions. In Chironomus tentans (Midge), this protein is High mobility group protein I.